A 578-amino-acid polypeptide reads, in one-letter code: Lysine--tRNA ligase (578 aa).

Residues Glu414 and Glu421 each coordinate Mg(2+).

It belongs to the class-II aminoacyl-tRNA synthetase family. As to quaternary structure, homodimer. Mg(2+) is required as a cofactor.

The protein localises to the cytoplasm. The catalysed reaction is tRNA(Lys) + L-lysine + ATP = L-lysyl-tRNA(Lys) + AMP + diphosphate. The polypeptide is Lysine--tRNA ligase (Porphyromonas gingivalis (strain ATCC BAA-308 / W83)).